A 1505-amino-acid polypeptide reads, in one-letter code: MNTHNNNYQQRSMDSAIVTINDKGYIQSVDRKTCELFGYTIEELQLQKVNILVPSPYKEQHDTYMQSYFETGVRKIIDKSRVVEGLHKDGSVFPITLSVTEVRIWNKRMFIGSIESIIDKRLIIYTDVHGIITYCNRNVEELIGYTPAELFGKNVSALMPSPHAKSHSEYIEKNYHGGGLWKMLNRVRNLPIKHKSGVVFLVSILVTKISTDGIDMFKAIIQTPPKEAVFTINGDGIIKACNFNFTEPMFGYTQKDLLGNTIGLLIPEMSKIIDNTSLNLTDSHDPQLQQQQQTTTTTTTTTTTTSTTSTTTSTPTPASIAVSGNNISSPPIDSPLTTPSTPTTFNHSRGVESWLGRTRKVDVWHRDGSRFPVNLEIIKLQGENSMFSLQIKKVENPRVYGKDKDKNGGGGGTTENKDGKQLDTIKESKEHRHSKEKKKRKKDRDHNNNNNNNNNNNNNNNEQTSDSSDSSDSDSESRSKKKRSSKKKSRRDDSSSDSSDSETESSSSPHKKNRSSNSSSNSSHSNAPHESSYYQPEMIGEYTLGKTLGRGNYGVVKLGTHINTKEEIAIKILYKEQMTESEFTRCKREIEILKQLYHPFINKLLNVLEKDDAMFILMDYCQGGDLFHYVNKFGLKGVKMVNSPDIGDQVLMGVPLPEDDTKRIFTQICLGIAHCHKLNIAHRDIKHKNILFDNQMNVKIIDFGLSNWSYQEKMSFCGTPAYAAPEMLLGINYNGPEVDIWSLGVILYSLVTGKLPFINVTDMIVGKFILPPSIPLDLQDLIKKMLTVDREHRLNIMNVLNHPWLSKDPASSTLISQNLLHSPPVVHQPQPPQHQKIQPTSIIPNFNEVETLKNNILNNNNNNNNNNNNNNNNILNSNNNNNNNNNNNSNNNNIINNSNNNSNNNNNINNNINNNNNVNNNVNNNKNNNNNNNNNSNNNSNNGNNIPNSSNNTNSIINNNLYNQSLSPQNNNIYQHSPQHQQHQHQQQHSPQQQQHQQHQHHQQQQQQLQQQHHQQHHQQHQQHQQQHQQQHQQQHQQHQQHQQSHQQPPVYFPTQIISDDFNLTSQLQRTQPNQQVSFDTNQSYQQQLQQPQIPHQVLMQQPPQILSHSNNQPINNYYVGQQPIQQIQQLQQQQQLQQQQQQQQQQQQQQQQQQQQQQQQQQQQQQQQQQQQQQQQQQQQQQQQQQNDPNFQPHLRRIKMSKRDNSYNKRKSEDGDSYKKRDNQSYDDILKDEGNKRLRELQTYSEGDKSRQHYNRDSNDNSRDNNRYNNRDNNNNNNSNNNRERDRYKKNKNENFDYGKYKFGKSNEDEENKDKPNIVREKPDFKPSGSLKNDSSSNYGTISSGRNNNNGEEDEENKIKLKWHEPAEAKLPTEKWMLYPFKGKDQLDTIYLHRKKSFLFGRNRDIADIPIDHPSCSSQHAVIVFRIRKKENPNTGSIKTFILPYIIDLESTNGTFLKGEKIEPAKYFELRPKDKITFGTSTREYILLCEDSIEGDESEEEDSD.

PAS domains follow at residues 2–72 (NTHN…FETG), 108–178 (RMFI…YHGG), and 215–284 (DMFK…TDSH). 2 disordered regions span residues 282-348 (DSHD…FNHS) and 398-533 (RVYG…ESSY). Composition is skewed to low complexity over residues 289 to 314 (QQQQ…TTST) and 328 to 344 (SSPP…TPTT). Basic and acidic residues-rich tracts occupy residues 398–407 (RVYGKDKDKN) and 415–430 (ENKD…ESKE). The span at 431–443 (HRHSKEKKKRKKD) shows a compositional bias: basic residues. The span at 448–468 (NNNNNNNNNNNNNNEQTSDSS) shows a compositional bias: low complexity. Residues 479-489 (SKKKRSSKKKS) are compositionally biased toward basic residues. The segment covering 515–532 (SSNSSSNSSHSNAPHESS) has biased composition (low complexity). Positions 542-805 (YTLGKTLGRG…IMNVLNHPWL (264 aa)) constitute a Protein kinase domain. ATP contacts are provided by residues 548-556 (LGRGNYGVV) and lysine 571. Aspartate 684 (proton acceptor) is an active-site residue. Residues 855–960 (NILNNNNNNN…NNTNSIINNN (106 aa)) are compositionally biased toward low complexity. 3 disordered regions span residues 855 to 1048 (NILN…SHQQ), 1072 to 1091 (QPNQ…QLQQ), and 1181 to 1358 (QQQQ…DEEN). Residues 903–939 (NNNNNINNNINNNNNVNNNVNNNKNNNNNNNNNSNNN) are a coiled coil. Polar residues predominate over residues 961–974 (LYNQSLSPQNNNIY). Composition is skewed to low complexity over residues 975–1013 (QHSP…QQQH) and 1022–1048 (QQHQ…SHQQ). Residues 1072 to 1082 (QPNQQVSFDTN) show a composition bias toward polar residues. Residues 1125–1189 (IQQIQQLQQQ…QQQQQQQQND (65 aa)) adopt a coiled-coil conformation. Positions 1202-1271 (SKRDNSYNKR…NSRDNNRYNN (70 aa)) are enriched in basic and acidic residues. Low complexity predominate over residues 1272 to 1282 (RDNNNNNNSNN). Basic and acidic residues-rich tracts occupy residues 1283–1301 (NRER…DYGK) and 1313–1326 (NKDK…KPDF). The span at 1331 to 1347 (SLKNDSSSNYGTISSGR) shows a compositional bias: polar residues. Residues 1399 to 1463 (FLFGRNRDIA…NGTFLKGEKI (65 aa)) enclose the FHA domain.

This sequence belongs to the protein kinase superfamily. CAMK Ser/Thr protein kinase family. SNF1 subfamily.

The enzyme catalyses L-seryl-[protein] + ATP = O-phospho-L-seryl-[protein] + ADP + H(+). It catalyses the reaction L-threonyl-[protein] + ATP = O-phospho-L-threonyl-[protein] + ADP + H(+). The sequence is that of Probable serine/threonine-protein kinase DDB_G0280133 from Dictyostelium discoideum (Social amoeba).